A 161-amino-acid chain; its full sequence is Type IV major fimbrial protein FimA (161 aa).

A propeptide spans 1–7 (leader sequence); the sequence is MKSLQKG. Position 8 is an N-methylphenylalanine (phenylalanine 8). The chain crosses the membrane as a helical span at residues 8-28; that stretch reads FTLIELMIVVAIIGILAAFAI. A disulfide bridge connects residues cysteine 63 and cysteine 106.

This sequence belongs to the N-Me-Phe pilin family. The pili are polar flexible filaments of about 5.4 nanometers diameter and 2.5 micrometers average length; they consist of only a single polypeptide chain arranged in a helical configuration of five subunits per turn in the assembled pilus.

The protein localises to the fimbrium. It localises to the membrane. Its function is as follows. Major component of the type IV fimbriae that plays an essential role in twitching motility, natural transformation, and protease secretion. The polypeptide is Type IV major fimbrial protein FimA (fimA) (Dichelobacter nodosus (Bacteroides nodosus)).